The sequence spans 938 residues: Glutamate receptor ionotropic, NMDA 1 (938 aa).

The first 18 residues, 1–18 (MSTMRLLTLALLFSCSVA), serve as a signal peptide directing secretion. The Extracellular segment spans residues 19–559 (RAACDPKIVN…TLDSFMQPFQ (541 aa)). Residues Asn-61, Asn-203, Asn-239, Asn-276, Asn-300, Asn-350, Asn-368, Asn-440, Asn-471, and Asn-491 are each glycosylated (N-linked (GlcNAc...) asparagine). An intrachain disulfide couples Cys-79 to Cys-308. Intrachain disulfides connect Cys-420/Cys-454 and Cys-436/Cys-455. The glycine site is built by Pro-516, Thr-518, and Arg-523. The helical transmembrane segment at 560–580 (STLWLLVGLSVHVVAVMLYLL) threads the bilayer. At 581-604 (DRFSPFGRFKVNSEEEEEDALTLS) the chain is on the cytoplasmic side. The segment at 603–624 (LSSAMWFSWGVLLNSGIGEGAP) is pore-forming. An intramembrane region (discontinuously helical) is located at residues 605-615 (SAMWFSWGVLL). At 616–627 (NSGIGEGAPRSF) the chain is on the cytoplasmic side. The helical transmembrane segment at 628–648 (SARILGMVWAGFAMIIVASYT) threads the bilayer. Residues 649 to 811 (ANLAAFLVLD…SNAPATLTFE (163 aa)) lie on the Extracellular side of the membrane. The N-linked (GlcNAc...) asparagine glycan is linked to Asn-674. Glycine contacts are provided by Ser-688 and Asp-732. Cys-744 and Cys-798 are oxidised to a cystine. The N-linked (GlcNAc...) asparagine glycan is linked to Asn-771. The chain crosses the membrane as a helical span at residues 812–835 (NMAGVFMLVAGGIVAGIFLIFIEI). The Cytoplasmic portion of the chain corresponds to 836-938 (AYKRHKDARR…LQLCSRHRES (103 aa)). Phosphoserine; by PKC is present on residues Ser-889, Ser-890, Ser-896, and Ser-897. A disordered region spans residues 889-938 (SSFKRRRSSKDTSTGGGRGALQNQKDTVLPRRAIEREEGQLQLCSRHRES). The span at 916-927 (VLPRRAIEREEG) shows a compositional bias: basic and acidic residues.

This sequence belongs to the glutamate-gated ion channel (TC 1.A.10.1) family. NR1/GRIN1 subfamily. In terms of assembly, heterotetramer; the NMDAR subunits are modular and harbor tiered domains that function in concert to regulate opening and closing of the cation-selective ion channel pore. Forms heterotetrameric channels composed of two GluN1/zeta subunits (GRIN1), and two identical GluN2/epsilon subunits (GRIN2A, GRIN2B, GRIN2C or GRIN2D) or GluN3 subunits (GRIN3A or GRIN3B) (in vitro). Can also form heterotetrameric channels that contain at least two GluN1 subunits and at least two different GluN2 subunits (or a combination of one GluN2 and one GluN3 subunits) (in vitro). In vivo, the subunit composition may vary in function of the expression levels of the different subunits. Found in a complex with GRIN2A or GRIN2B, GRIN3A and PPP2CB. Found in a complex with GRIN2A or GRIN2B and GRIN3B. Interacts with SNX27 (via PDZ domain); the interaction is required for recycling to the plasma membrane when endocytosed and prevent degradation in lysosomes. Interacts with DLG4 and MPDZ. Interacts with LRFN1 and LRFN2. Interacts with MYZAP. Found in a complex with DLG4 and PRR7. Found in a complex with GRIN2B and PRR7. Interacts with PRR7; the interaction is reduced following NMDA receptor activity. In terms of processing, NMDA is probably regulated by C-terminal phosphorylation of an isoform of GRIN1 by PKC. Dephosphorylated on Ser-897 probably by protein phosphatase 2A (PPP2CB). Its phosphorylated state is influenced by the formation of the NMDAR-PPP2CB complex and the NMDAR channel activity.

It is found in the cell membrane. It localises to the postsynaptic cell membrane. The protein resides in the postsynaptic density membrane. The protein localises to the synaptic cell membrane. The enzyme catalyses Ca(2+)(in) = Ca(2+)(out). The catalysed reaction is Na(+)(in) = Na(+)(out). It catalyses the reaction K(+)(in) = K(+)(out). Its activity is regulated as follows. NMDA glutamate receptor activity is inhbited by Mg2(+) in a voltage-dependent manner; Mg2(+)-induced blockade occurs only at negative potentials and decreases with membrane depolarization. 7-chlorokynurenate (50 uM) or Zn2(+) (100 uM) partially inhibit the NMDA glutamate receptor activity, while acide 2-amino-5-phosphonovalerique(100 uM) almost completely blocked the NMDA glutamate receptor activity. Dizocilpine (1 uM) results in long lasting and almost complete block of the NMDA glutamate receptor activity. Its function is as follows. Component of N-methyl-D-aspartate (NMDA) receptors (NMDARs) that function as heterotetrameric, ligand-gated cation channels with high calcium permeability and voltage-dependent block by Mg(2+). NMDARs participate in synaptic plasticity for learning and memory formation by contributing to the long-term potentiation (LTP). Channel activation requires binding of the neurotransmitter L-glutamate to the GluN2 subunit, glycine or D-serine binding to the GluN1 subunit, plus membrane depolarization to eliminate channel inhibition by Mg(2+). NMDARs mediate simultaneously the potasium efflux and the influx of calcium and sodium. Each GluN2 or GluN3 subunit confers differential attributes to channel properties, including activation, deactivation and desensitization kinetics, pH sensitivity, Ca2(+) permeability, and binding to allosteric modulators. The protein is Glutamate receptor ionotropic, NMDA 1 of Homo sapiens (Human).